Here is a 623-residue protein sequence, read N- to C-terminus: MPHSDELDSRDVLSVSGLNIAFHHEGQQIDAVRNVSLRLKRGETLAIVGESGSGKSVTALALMRLIEQSGANVRCGEMLLRRRNRQVIELSEQSDAQMRRVRGADIAMIFQEPMTSLNPVFTVGEQIAESIRLHQGASHEEALAEAKRMLDQVRIPESQAILSRYPHQLSGGMRQRVMIAMALSCRPAVLIADEPTTALDVTIQAQILQLIKVLQQEMSMGVIFITHDMGVVADIADRVLVMYQGEAVETGSVEQIFHAPTHPYTQTLLAAVPQLGAMRGHSLPRRFPLISADEPALYESQIEQDTVVEGEPILQVRGLVTRFPLRSGLFNRVTREVHAVENISFDLWPGETLSLVGESGSGKSTTGRALLRLVESRQGEIIFNGQRIDSLSAGKLQPLRRDIQCIFQDPYASLDPRQTVGYSIMEPLRIHGLGQGDAAAKRVAWLLERVGLRPEHAWRYPHEFSGGQRQRICIARALALNPKVIIADEAVSALDVSVRGQIINLLLDLQREMGIAYLFISHDMAVVERISHRVAVMYLGQIVEMGPRRAVFENPQHPYTRKLMAAVPVADPSRHRPRRVLLSDDIPSNIHKRGEETPAVSLQLVGPGHYVARPLQDNALSRL.

2 ABC transporter domains span residues 15 to 269 and 325 to 564; these read VSGL…QTLL and LRSG…RKLM. ATP-binding positions include 49–56 and 357–364; these read GESGSGKS.

The protein belongs to the ABC transporter superfamily. Glutathione importer (TC 3.A.1.5.11) family. The complex is composed of two ATP-binding proteins (GsiA), two transmembrane proteins (GsiC and GsiD) and a solute-binding protein (GsiB).

It localises to the cell inner membrane. It carries out the reaction glutathione(out) + ATP + H2O = glutathione(in) + ADP + phosphate + H(+). Its function is as follows. Part of the ABC transporter complex GsiABCD involved in glutathione import. Responsible for energy coupling to the transport system. This Salmonella paratyphi A (strain ATCC 9150 / SARB42) protein is Glutathione import ATP-binding protein GsiA.